The chain runs to 728 residues: Prolyl 3-hydroxylase 1 (728 aa).

A signal peptide spans 1–14 (MVAVAAAAASRATA). TPR repeat units lie at residues 25 to 58 (PDLLYAEGTAAYARGDWPGVVLNMERALRSRAAL), 135 to 168 (RSPYNYLQVAYFKINKLEKAVAAAHTFFVGNPEH), 197 to 230 (HMHEFRLGVRLYSEEKPLEAVPHLEAALQEYFVA), and 293 to 326 (PSHYNYLQFAYYNIGNYTQAIECAKTYLLFFPND). An N-linked (GlcNAc...) asparagine glycan is attached at Asn308. Positions 393-431 (KRLQEKQKSERETAVRISQEIGNLMKEIETLVEEKTKES) form a coiled coil. N-linked (GlcNAc...) asparagine glycosylation is found at Asn450, Asn459, and Asn532. One can recognise a Fe2OG dioxygenase domain in the interval 556 to 670 (SHLVCRTAIE…RCAIALWFTL (115 aa)). The Fe cation site is built by His579, Asp581, and His651. Residue Arg661 is part of the active site. Positions 691 to 728 (SPEEVDLPQEQPLPDQQGSPKPGEESLSDRESQPKDEL) are disordered. Over residues 698–707 (PQEQPLPDQQ) the composition is skewed to low complexity. Basic and acidic residues predominate over residues 712–728 (PGEESLSDRESQPKDEL). Residues 725–728 (KDEL) carry the Prevents secretion from ER motif.

The protein belongs to the leprecan family. The cofactor is Fe cation. L-ascorbate is required as a cofactor. Post-translationally, O-glycosylated; chondroitin sulfate. In terms of tissue distribution, expressed in basement membranes of cardiac muscle, skeletal muscle, central nervous system, intestinal tract, trachea, ear, skin, liver and kidney. In kidney, localizes to the glomerular basement membrane, mesangial matrix and Bowman's capsule of the nephron. In the renal parenchyma, expressed in the basement membranes of tubules and blood vessels. In the ear and trachea, localizes to the perimeter of resident chondrocytes in lacunae.

The protein resides in the endoplasmic reticulum. It is found in the secreted. The protein localises to the extracellular space. Its subcellular location is the extracellular matrix. It carries out the reaction L-prolyl-[collagen] + 2-oxoglutarate + O2 = trans-3-hydroxy-L-prolyl-[collagen] + succinate + CO2. Basement membrane-associated chondroitin sulfate proteoglycan (CSPG). Has prolyl 3-hydroxylase activity catalyzing the post-translational formation of 3-hydroxyproline in -Xaa-Pro-Gly- sequences in collagens, especially types IV and V. May be involved in the secretory pathway of cells. Has growth suppressive activity in fibroblasts. In Rattus norvegicus (Rat), this protein is Prolyl 3-hydroxylase 1.